The primary structure comprises 103 residues: uncharacterized protein (103 aa).

The disordered stretch occupies residues 69–103 (SSISYPGGGGGGGGSAKSLSSSKPGGGGGSPLIFL). Gly residues-rich tracts occupy residues 74–83 (PGGGGGGGGS) and 92–103 (PGGGGGSPLIFL).

This is an uncharacterized protein from Saccharomyces cerevisiae (strain ATCC 204508 / S288c) (Baker's yeast).